The primary structure comprises 359 residues: 3-dehydroquinate synthase (359 aa).

NAD(+) contacts are provided by residues 71-76, 105-109, 129-130, Lys-142, Lys-151, and 169-172; these read DGEQYK, GVIGD, TT, and CLST. 3 residues coordinate Zn(2+): Glu-184, His-247, and His-264.

This sequence belongs to the sugar phosphate cyclases superfamily. Dehydroquinate synthase family. Co(2+) is required as a cofactor. Requires Zn(2+) as cofactor. It depends on NAD(+) as a cofactor.

Its subcellular location is the cytoplasm. It carries out the reaction 7-phospho-2-dehydro-3-deoxy-D-arabino-heptonate = 3-dehydroquinate + phosphate. It functions in the pathway metabolic intermediate biosynthesis; chorismate biosynthesis; chorismate from D-erythrose 4-phosphate and phosphoenolpyruvate: step 2/7. Functionally, catalyzes the conversion of 3-deoxy-D-arabino-heptulosonate 7-phosphate (DAHP) to dehydroquinate (DHQ). The polypeptide is 3-dehydroquinate synthase (Shewanella pealeana (strain ATCC 700345 / ANG-SQ1)).